The following is a 1294-amino-acid chain: Leucine-rich repeat receptor protein kinase MSP1 (1294 aa).

The signal sequence occupies residues 1–22; it reads MVSNSFWLFILLVSFIPISAWA. 5 LRR repeats span residues 88–112, 113–136, 138–160, 161–184, and 186–207; these read FQSL…LGNL, QNLQ…LYNL, MLKE…IAQL, QHLT…LGSL, and NLEL…TFGN. Asn198, Asn207, and Asn220 each carry an N-linked (GlcNAc...) asparagine glycan. LRR repeat units follow at residues 232-256, 258-280, 282-304, 305-328, 330-352, 353-376, 378-400, 401-422, 423-446, 447-469, 471-493, 494-517, 519-541, 542-565, 566-589, 591-613, 614-637, 649-673, 675-697, 698-721, 722-745, 746-770, and 772-794; these read LTNL…IGQL, NLEL…IGSL, QLKL…ISGL, SSLT…MGEL, NLTQ…LGNC, KKLT…FADL, AIVS…IQKW, KNAR…VLPL, QHLL…ICQA, NSLH…AFKG, TNLT…YLAE, LPLV…LWES, TLLE…IGKL, SVLQ…VGDL, RNLT…LFNC, KLAT…ISHL, TLLD…ICVG, LQHH…IKNC, MVMV…LGEL, TNLT…SGPL, VQLQ…IGQI, LPKI…LLCN, and YLNH…CPDG. N-linked (GlcNAc...) asparagine glycosylation is found at Asn330 and Asn359. Asn458 and Asn472 each carry an N-linked (GlcNAc...) asparagine glycan. N-linked (GlcNAc...) asparagine glycosylation is found at Asn567, Asn570, and Asn601. N-linked (GlcNAc...) asparagine glycans are attached at residues Asn687, Asn699, and Asn704. 3 N-linked (GlcNAc...) asparagine glycosylation sites follow: Asn805, Asn821, and Asn832. LRR repeat units follow at residues 822–846 and 848–870; these read FTQL…LSDL and SLNY…ICNI. Residues 917 to 937 traverse the membrane as a helical segment; sequence ITICAFTFVIIIVLVLLAVYL. The 281-residue stretch at 1002 to 1282 folds into the Protein kinase domain; that stretch reads FSKVHIIGDG…KGLKMTHGME (281 aa). Residues 1008 to 1016 and Lys1030 contribute to the ATP site; that span reads IGDGGFGTV. Asp1129 acts as the Proton acceptor in catalysis.

This sequence belongs to the protein kinase superfamily. Ser/Thr protein kinase family. As to quaternary structure, interacts with TDL1A. As to expression, expressed in anthers and ovules during meiosis.

The protein resides in the cell membrane. The enzyme catalyses L-seryl-[protein] + ATP = O-phospho-L-seryl-[protein] + ADP + H(+). It catalyses the reaction L-threonyl-[protein] + ATP = O-phospho-L-threonyl-[protein] + ADP + H(+). Its function is as follows. Receptor-like kinase that plays important roles in restricting the number of cells entering into male and female sporogenesis. Involved in cell specification during anther development and initiation of anther wall formation. In Oryza sativa subsp. japonica (Rice), this protein is Leucine-rich repeat receptor protein kinase MSP1.